We begin with the raw amino-acid sequence, 100 residues long: Class II hydrophobin 4 (100 aa).

The signal sequence occupies residues 1–17 (MQFYAIASLFLAGTAFA). Intrachain disulfides connect C29-C79, C40-C70, C41-C53, and C80-C92.

This sequence belongs to the cerato-ulmin hydrophobin family.

The protein localises to the secreted. The protein resides in the cell wall. In terms of biological role, aerial growth, conidiation, and dispersal of filamentous fungi in the environment rely upon a capability of their secreting small amphipathic proteins called hydrophobins (HPBs) with low sequence identity. Class I can self-assemble into an outermost layer of rodlet bundles on aerial cell surfaces, conferring cellular hydrophobicity that supports fungal growth, development and dispersal; whereas Class II form highly ordered films at water-air interfaces through intermolecular interactions but contribute nothing to the rodlet structure. Does not seem to be important for the ability to cause seedling disease. This Gibberella moniliformis (Maize ear and stalk rot fungus) protein is Class II hydrophobin 4.